Reading from the N-terminus, the 203-residue chain is Small ribosomal subunit protein uS4 (203 aa).

In terms of domain architecture, S4 RNA-binding spans 92 to 164 (TRLDSVVYLL…LEENRIRNVP (73 aa)).

Belongs to the universal ribosomal protein uS4 family. As to quaternary structure, part of the 30S ribosomal subunit. Contacts protein S5. The interaction surface between S4 and S5 is involved in control of translational fidelity.

Functionally, one of the primary rRNA binding proteins, it binds directly to 16S rRNA where it nucleates assembly of the body of the 30S subunit. In terms of biological role, with S5 and S12 plays an important role in translational accuracy. This chain is Small ribosomal subunit protein uS4, found in Opitutus terrae (strain DSM 11246 / JCM 15787 / PB90-1).